The following is a 389-amino-acid chain: Multidrug resistance protein 1 (389 aa).

Helical transmembrane passes span 6-26 (ITLT…GLVI), 42-62 (AVGY…PIAG), 71-91 (KIMI…FGIG), 102-122 (MLGG…IADI), 134-154 (YMSA…GFLA), 160-180 (LPFF…ILTL), 202-222 (IFAP…FGLA), 243-263 (IAIM…VLFD), 286-306 (VFLL…VTVF), 336-356 (SMFT…LFDI), and 358-378 (VNYP…LTIA).

This sequence belongs to the major facilitator superfamily. TCR/Tet family.

It localises to the cell membrane. Energy-dependent efflux pump responsible for decreased drug accumulation in multi-drug-resistant cells. Probably uses a transmembrane proton gradient as the energy source. Causes the efflux of a variety of toxic substances, including such structurally diverse compounds as ethidium bromide, rhodamine and acridine dyes, tetraphenylphosphonium, puromycin, chloramphenicol, doxorubicin, and fluoroquinolone antibiotics. The sequence is that of Multidrug resistance protein 1 (bmr) from Bacillus subtilis (strain 168).